A 282-amino-acid chain; its full sequence is MARNPFRMFPGDLPYYMGTISFTSVVPVDPSQRNPTTSLREMVTTGLIFNPNLTGEQLREYSFSPLVSMGRKAIFADYEGPQRIIHVTIRGRSAEPKTPSEALIMMEKAVRGAFAVPDWVAREYSDPLPHGITHVGDLGFPIGSVHALKMALDTLKIHVPRGVGVPGYEGLCGTTTIKAPRQYRLLTTGVFTKKDLKRTLPEPFFSRFFNQTPEVCAIKTGKNPFSTEIWCMTLGGDSPAPERNEPRNPHSLQDWARLGVMETCLRMSRRGLGSRHHPYHSL.

A BC-box-like motif is present at residues 251–260 (SLQDWARLGV).

In terms of assembly, interacts with host HDAC1. Interacts with host E1-activating enzyme (SAE1/UBA2 heterodimer). Interacts with host retinoblastoma protein. Seems to form a complex with host E4F1 and HDAC1. Seems to form complexes with either CUL2-elongin BC complex-RBX1 or CUL5-elongin BC complex-RBX1. Interacts with TCEB1/Elongin-C, CUL2 and CUL5 in vitro.

Its subcellular location is the host nucleus. Early protein essential for viral replication. Strong and global transcriptional activator of both viral and cellular genes. Activates transcription by blocking host retinoblastoma protein (RB) and inhibiting the SUMO pathway. Inhibition of host RB leads to the activation of E2F1-dependent transcription and, in particular, of E2F1-regulated S-phase genes. Stimulation of progression from G1 to S phase allows the virus to efficiently use the cellular DNA replicating machinery to achieve viral genome replication. Blocks the SUMO pathway by targeting the E1 enzyme (SAE1/UBA2 heterodimer) to the ubiquitin-proteasome machinery. Mediates SAE1 degradation possibly through the formation of complexes with either CUL2-elongin BC complex-RBX1 or CUL5-elongin BC complex-RBX1. The degradation of UBA2 is probably a consequent effect of SAE1 disappearance. Inhibits HDAC1 sumoylation, thereby interfering with histone deacetylation mediated by HDAC1, leading to activation of transcription. Mediates induction of heat-shock response. Seems to have an antiapoptotic function. The polypeptide is Protein GAM-1 (Galliformes (FAdV-1)).